A 263-amino-acid chain; its full sequence is Type III pantothenate kinase (263 aa).

Asp-14–Asn-21 contacts ATP. Residue Gly-115–Arg-118 participates in substrate binding. Asp-117 (proton acceptor) is an active-site residue. Asp-137 is a binding site for K(+). Thr-140 contributes to the ATP binding site. Thr-192 is a binding site for substrate.

The protein belongs to the type III pantothenate kinase family. Homodimer. Requires NH4(+) as cofactor. K(+) is required as a cofactor.

Its subcellular location is the cytoplasm. The catalysed reaction is (R)-pantothenate + ATP = (R)-4'-phosphopantothenate + ADP + H(+). It participates in cofactor biosynthesis; coenzyme A biosynthesis; CoA from (R)-pantothenate: step 1/5. In terms of biological role, catalyzes the phosphorylation of pantothenate (Pan), the first step in CoA biosynthesis. This Dehalococcoides mccartyi (strain CBDB1) protein is Type III pantothenate kinase.